The sequence spans 296 residues: Lipoyl synthase (296 aa).

[4Fe-4S] cluster contacts are provided by Cys-37, Cys-42, Cys-48, Cys-63, Cys-67, Cys-70, and Ser-276. One can recognise a Radical SAM core domain in the interval 49-265 (WSKKHTTVMI…ERVAKTKGFL (217 aa)).

This sequence belongs to the radical SAM superfamily. Lipoyl synthase family. [4Fe-4S] cluster is required as a cofactor.

The protein resides in the cytoplasm. The catalysed reaction is [[Fe-S] cluster scaffold protein carrying a second [4Fe-4S](2+) cluster] + N(6)-octanoyl-L-lysyl-[protein] + 2 oxidized [2Fe-2S]-[ferredoxin] + 2 S-adenosyl-L-methionine + 4 H(+) = [[Fe-S] cluster scaffold protein] + N(6)-[(R)-dihydrolipoyl]-L-lysyl-[protein] + 4 Fe(3+) + 2 hydrogen sulfide + 2 5'-deoxyadenosine + 2 L-methionine + 2 reduced [2Fe-2S]-[ferredoxin]. The protein operates within protein modification; protein lipoylation via endogenous pathway; protein N(6)-(lipoyl)lysine from octanoyl-[acyl-carrier-protein]: step 2/2. Its function is as follows. Catalyzes the radical-mediated insertion of two sulfur atoms into the C-6 and C-8 positions of the octanoyl moiety bound to the lipoyl domains of lipoate-dependent enzymes, thereby converting the octanoylated domains into lipoylated derivatives. This Rickettsia conorii (strain ATCC VR-613 / Malish 7) protein is Lipoyl synthase.